Here is a 780-residue protein sequence, read N- to C-terminus: ATP-dependent DNA helicase RecG (780 aa).

Domain regions lie at residues 1–350 (MLCS…GGIP), 351–549 (KKIE…EMPP), and 550–780 (GRKE…IEVG). The wedge domain stretch occupies residues 154 to 252 (RKIFKLNDLL…VTPKEGEYVR (99 aa)). ATP contacts are provided by Phe-367, Leu-369, Gly-399, Ser-400, Gly-401, Lys-402, Thr-403, and Arg-436. The Helicase ATP-binding domain maps to 383–544 (DMISEKPMNR…FYGDLDVTVI (162 aa)). A DEAH box motif is present at residues 497-500 (DEQH). Positions 563 to 728 (RVNEVYEFVR…EYDLKTRGPG (166 aa)) constitute a Helicase C-terminal domain.

The protein belongs to the helicase family. RecG subfamily. As to quaternary structure, monomer.

The enzyme catalyses Couples ATP hydrolysis with the unwinding of duplex DNA by translocating in the 3'-5' direction.. The catalysed reaction is ATP + H2O = ADP + phosphate + H(+). In terms of biological role, plays a critical role in recombination and DNA repair. Helps process Holliday junction intermediates to mature products by catalyzing branch migration. Has replication fork (Y-DNA) regression activity, unwinds stalled or blocked replication forks to make a HJ that can be resolved. Has a DNA unwinding activity characteristic of a DNA helicase with 3'-5' polarity. Might be a DNA translocase rather than a bona fide helicase. The protein is ATP-dependent DNA helicase RecG of Thermotoga maritima (strain ATCC 43589 / DSM 3109 / JCM 10099 / NBRC 100826 / MSB8).